The primary structure comprises 429 residues: tRNA modification GTPase MnmE (429 aa).

(6S)-5-formyl-5,6,7,8-tetrahydrofolate is bound by residues Arg20, Glu77, and Arg117. In terms of domain architecture, TrmE-type G spans 213–353; the sequence is GFEVAILGAP…LVKAVSHRLS (141 aa). Asn223 contacts K(+). Residues 223–228, 242–248, and 267–270 contribute to the GTP site; these read NVGKSS, SSIAGTT, and DTAG. Ser227 contributes to the Mg(2+) binding site. The K(+) site is built by Ser242, Ile244, and Thr247. Thr248 lines the Mg(2+) pocket. Position 429 (Lys429) interacts with (6S)-5-formyl-5,6,7,8-tetrahydrofolate.

This sequence belongs to the TRAFAC class TrmE-Era-EngA-EngB-Septin-like GTPase superfamily. TrmE GTPase family. Homodimer. Heterotetramer of two MnmE and two MnmG subunits. It depends on K(+) as a cofactor.

The protein localises to the cytoplasm. Its function is as follows. Exhibits a very high intrinsic GTPase hydrolysis rate. Involved in the addition of a carboxymethylaminomethyl (cmnm) group at the wobble position (U34) of certain tRNAs, forming tRNA-cmnm(5)s(2)U34. This Dinoroseobacter shibae (strain DSM 16493 / NCIMB 14021 / DFL 12) protein is tRNA modification GTPase MnmE.